The following is a 295-amino-acid chain: RNA polymerase sigma-C factor (295 aa).

The Polymerase core binding motif lies at 73–86; sequence DLIQEANIGLMKAV. A DNA-binding region (H-T-H motif) is located at residues 250-269; that stretch reads LSELGEHFGFSRERARQLEI.

This sequence belongs to the sigma-70 factor family.

In terms of biological role, sigma factors are initiation factors that promote the attachment of RNA polymerase to specific initiation sites and are then released. This sigma factor is essential for normal fruiting body formation. The chain is RNA polymerase sigma-C factor (sigC) from Myxococcus xanthus.